The chain runs to 611 residues: Glutamine--fructose-6-phosphate aminotransferase [isomerizing] (611 aa).

The active-site Nucleophile; for GATase activity is the cysteine 2. The region spanning 2 to 219 (CGIVGAVAER…EGDIAEIRRD (218 aa)) is the Glutamine amidotransferase type-2 domain. SIS domains follow at residues 287–427 (AADL…VRGT) and 460–601 (IAEL…VDQP). Lysine 606 functions as the For Fru-6P isomerization activity in the catalytic mechanism.

In terms of assembly, homodimer.

The protein resides in the cytoplasm. The enzyme catalyses D-fructose 6-phosphate + L-glutamine = D-glucosamine 6-phosphate + L-glutamate. Its function is as follows. Catalyzes the first step in hexosamine metabolism, converting fructose-6P into glucosamine-6P using glutamine as a nitrogen source. This Pseudomonas putida (strain ATCC 47054 / DSM 6125 / CFBP 8728 / NCIMB 11950 / KT2440) protein is Glutamine--fructose-6-phosphate aminotransferase [isomerizing].